Consider the following 742-residue polypeptide: RING finger protein 145 homolog (742 aa).

The next 11 helical transmembrane spans lie at Ala-109–Leu-129, His-138–Leu-158, His-178–Val-198, Ala-233–Ile-253, Ile-285–Leu-305, Ile-318–Val-338, Ser-368–Met-388, Ile-395–Ile-415, Ile-438–Leu-458, Ile-463–Ile-483, and Val-533–Ile-553. Residues Cys-592 to Cys-630 form an RING-type; atypical zinc finger. Disordered regions lie at residues Lys-642–Met-684 and Ala-722–Asn-742. Acidic residues predominate over residues Ala-659–Pro-672.

Its subcellular location is the membrane. The protein resides in the golgi apparatus. It localises to the cis-Golgi network. The protein localises to the trans-Golgi network. It catalyses the reaction S-ubiquitinyl-[E2 ubiquitin-conjugating enzyme]-L-cysteine + [acceptor protein]-L-lysine = [E2 ubiquitin-conjugating enzyme]-L-cysteine + N(6)-ubiquitinyl-[acceptor protein]-L-lysine.. In terms of biological role, E3 ubiquitin ligase that catalyzes the direct transfer of ubiquitin from E2 ubiquitin-conjugating enzyme to a specific substrate. Acting downstream of probable Golgi transport protein eas-1, involved in inhibition of activation of transcription factor sbp-1, thereby playing a role in regulating AMsh glial cell size. The chain is RING finger protein 145 homolog from Caenorhabditis elegans.